We begin with the raw amino-acid sequence, 545 residues long: CTP synthase (545 aa).

An amidoligase domain region spans residues 1-266; it reads MTTRYIFVTG…DDLVTKRFGL (266 aa). Position 14 (Ser14) interacts with CTP. Residue Ser14 participates in UTP binding. ATP-binding positions include 15–20 and Asp72; that span reads SLGKGI. Mg(2+) is bound by residues Asp72 and Glu140. CTP is bound by residues 147 to 149, 187 to 192, and Lys223; these read DIE and KTKPTQ. UTP is bound by residues 187–192 and Lys223; that span reads KTKPTQ. Position 239 to 241 (239 to 241) interacts with ATP; that stretch reads KDV. A Glutamine amidotransferase type-1 domain is found at 291-542; that stretch reads TIGMVGKYTE…VAAAVAYQKR (252 aa). An L-glutamine-binding site is contributed by Gly352. Cys379 (nucleophile; for glutamine hydrolysis) is an active-site residue. Residues 380–383, Glu403, and Arg470 each bind L-glutamine; that span reads LGMQ. Catalysis depends on residues His515 and Glu517.

It belongs to the CTP synthase family. In terms of assembly, homotetramer.

It carries out the reaction UTP + L-glutamine + ATP + H2O = CTP + L-glutamate + ADP + phosphate + 2 H(+). The enzyme catalyses L-glutamine + H2O = L-glutamate + NH4(+). The catalysed reaction is UTP + NH4(+) + ATP = CTP + ADP + phosphate + 2 H(+). It functions in the pathway pyrimidine metabolism; CTP biosynthesis via de novo pathway; CTP from UDP: step 2/2. Its activity is regulated as follows. Allosterically activated by GTP, when glutamine is the substrate; GTP has no effect on the reaction when ammonia is the substrate. The allosteric effector GTP functions by stabilizing the protein conformation that binds the tetrahedral intermediate(s) formed during glutamine hydrolysis. Inhibited by the product CTP, via allosteric rather than competitive inhibition. Catalyzes the ATP-dependent amination of UTP to CTP with either L-glutamine or ammonia as the source of nitrogen. Regulates intracellular CTP levels through interactions with the four ribonucleotide triphosphates. This is CTP synthase from Shewanella loihica (strain ATCC BAA-1088 / PV-4).